We begin with the raw amino-acid sequence, 731 residues long: 1,4-alpha-glucan branching enzyme GlgB 2 (731 aa).

Residue D410 is the Nucleophile of the active site. The active-site Proton donor is the E463.

Belongs to the glycosyl hydrolase 13 family. GlgB subfamily. In terms of assembly, monomer.

The enzyme catalyses Transfers a segment of a (1-&gt;4)-alpha-D-glucan chain to a primary hydroxy group in a similar glucan chain.. Its pathway is glycan biosynthesis; glycogen biosynthesis. Functionally, catalyzes the formation of the alpha-1,6-glucosidic linkages in glycogen by scission of a 1,4-alpha-linked oligosaccharide from growing alpha-1,4-glucan chains and the subsequent attachment of the oligosaccharide to the alpha-1,6 position. This chain is 1,4-alpha-glucan branching enzyme GlgB 2, found in Xanthomonas oryzae pv. oryzae (strain MAFF 311018).